The sequence spans 305 residues: Acyl transferase (305 aa).

Active-site charge relay system residues include Ser-116, Asp-213, and His-243.

The protein belongs to the LuxD family.

Its pathway is lipid metabolism; fatty acid reduction for biolumincescence. Its function is as follows. Acyl transferase is part of the fatty acid reductase system required for aldehyde biosynthesis; it produces fatty acids for the luminescent reaction. The sequence is that of Acyl transferase from Photobacterium leiognathi.